Consider the following 308-residue polypeptide: Taste receptor type 2 member 41 (308 aa).

Residues 1–6 (MLSTVS) are Extracellular-facing. The helical transmembrane segment at 7–27 (VFFMSIFVLLCFLGILANGFI) threads the bilayer. Residues 28 to 60 (VLMLSREWLWRGRLLPSDMILLSLGTSRFCQQC) are Cytoplasmic-facing. Residues 61-81 (VGLVNSFYYSLHLVEYSRSLA) form a helical membrane-spanning segment. The Extracellular portion of the chain corresponds to 82–90 (RQLISLHMD). Residues 91-111 (FLNSATFWFGTWLSVLFCIKI) form a helical membrane-spanning segment. Residues 112 to 128 (ANFSHPAFLWLKWRFPA) are Cytoplasmic-facing. A helical transmembrane segment spans residues 129-149 (LVPWLLLGSILVSFIVTLMFF). Over 150 to 184 (WGNHTVYQAFLRRKFSGNTTFKEWNRRLEIDYFMP) the chain is Extracellular. Asn152 and Asn167 each carry an N-linked (GlcNAc...) asparagine glycan. Residues 185 to 205 (LKLVTTSIPCSLFLVSILLLI) form a helical membrane-spanning segment. The Cytoplasmic segment spans residues 206 to 239 (NSLRRHSQRMQHNAHSLQDPNTQAHSRALKSLIS). A helical transmembrane segment spans residues 240 to 260 (FLVLYALSYVSMVIDATVVIS). Over 261–264 (SDNV) the chain is Extracellular. Residues 265–285 (WYWPWQIILYLCMSVHPFILI) form a helical membrane-spanning segment. Residues 286-308 (TNNLKFRGTFRQLLLLARGFWVT) are Cytoplasmic-facing.

It belongs to the G-protein coupled receptor T2R family. In terms of tissue distribution, expressed in subsets of taste receptor cells of the tongue and palate epithelium and exclusively in gustducin-positive cells. Expressed in 15% taste bud cells in circumvallate and foliate papillae but only in 2% in fungiform papillae. Expressed in the duodenum, antrum and fundus (part of the stomach).

The protein resides in the membrane. Its function is as follows. Receptor that may play a role in the perception of bitterness and is gustducin-linked. May play a role in sensing the chemical composition of the gastrointestinal content. The activity of this receptor may stimulate alpha gustducin, mediate PLC-beta-2 activation and lead to the gating of TRPM5. The chain is Taste receptor type 2 member 41 (Tas2r41) from Rattus norvegicus (Rat).